Reading from the N-terminus, the 147-residue chain is Deoxyuridine 5'-triphosphate nucleotidohydrolase (147 aa).

Substrate-binding positions include 63–65 (RSG), Asn-76, and 80–82 (TID).

The protein belongs to the dUTPase family. The cofactor is Mg(2+).

It carries out the reaction dUTP + H2O = dUMP + diphosphate + H(+). Its pathway is pyrimidine metabolism; dUMP biosynthesis; dUMP from dCTP (dUTP route): step 2/2. This enzyme is involved in nucleotide metabolism: it produces dUMP, the immediate precursor of thymidine nucleotides and it decreases the intracellular concentration of dUTP so that uracil cannot be incorporated into DNA. The chain is Deoxyuridine 5'-triphosphate nucleotidohydrolase from Chlamydia abortus (strain DSM 27085 / S26/3) (Chlamydophila abortus).